A 451-amino-acid chain; its full sequence is Tubulin gamma-2 chain (451 aa).

Ser-131 carries the phosphoserine; by BRSK1 modification. Position 142-148 (142-148) interacts with GTP; the sequence is AGGTGSG.

The protein belongs to the tubulin family. In terms of assembly, component of the gamma-tubulin ring complex (gTuRC) consisting of TUBGCP2, TUBGCP3, TUBGCP4, TUBGCP5 and TUBGCP6 and gamma-tubulin TUBG1 or TUBG2. TUBGCP2, TUBGCP3, TUBGCP4, TUBGCP5 and TUBGCP6 assemble in a 5:5:2:1:1 stoichiometry; each is associated with a gamma-tubulin, thereby arranging 14 gamma-tubulins in a helical manner. Gamma-tubulin at the first position is blocked by TUBGCP3 at the last position, allowing 13 protafilaments to grow into a microtubule. Interacts with alpha-beta tubulin heterodimers; the interaction allows microtubules to nucleate from the gTuRC. Phosphorylation at Ser-131 by BRSK1 regulates centrosome duplication, possibly by mediating relocation of gamma-tubulin and its associated proteins from the cytoplasm to the centrosome.

It is found in the cytoplasm. Its subcellular location is the cytoskeleton. The protein resides in the microtubule organizing center. It localises to the centrosome. Its function is as follows. Tubulin is the major constituent of microtubules, protein filaments consisting of alpha- and beta-tubulin heterodimers. Gamma-tubulin is a key component of the gamma-tubulin ring complex (gTuRC) which mediates microtubule nucleation. The gTuRC regulates the minus-end nucleation of alpha-beta tubulin heterodimers that grow into microtubule protafilaments, a critical step in centrosome duplication and spindle formation. The sequence is that of Tubulin gamma-2 chain (Tubg2) from Mus musculus (Mouse).